The chain runs to 77 residues: MQFPVFFFRCFSYGISSMPLKNKVVFNENMERKDTFYQLILKVLSALLLLSVRNSSGHTRHFVQSSEKIYRRSLFKQ.

Residues 36–52 (FYQLILKVLSALLLLSV) form a helical membrane-spanning segment.

It is found in the membrane. This is an uncharacterized protein from Saccharomyces cerevisiae (strain ATCC 204508 / S288c) (Baker's yeast).